We begin with the raw amino-acid sequence, 212 residues long: Large ribosomal subunit protein uL3 (212 aa).

Gln153 is subject to N5-methylglutamine.

It belongs to the universal ribosomal protein uL3 family. As to quaternary structure, part of the 50S ribosomal subunit. Forms a cluster with proteins L14 and L19. Methylated by PrmB.

In terms of biological role, one of the primary rRNA binding proteins, it binds directly near the 3'-end of the 23S rRNA, where it nucleates assembly of the 50S subunit. The protein is Large ribosomal subunit protein uL3 of Shewanella halifaxensis (strain HAW-EB4).